The chain runs to 339 residues: Ketol-acid reductoisomerase (NADP(+)) (339 aa).

Residues 1-182 form the KARI N-terminal Rossmann domain; sequence MRVYYDRDAD…GGGRSGVIET (182 aa). NADP(+)-binding positions include 24 to 27, arginine 48, serine 51, threonine 53, and 83 to 86; these read YGSQ and DELQ. Histidine 108 is an active-site residue. Position 134 (glycine 134) interacts with NADP(+). One can recognise a KARI C-terminal knotted domain in the interval 183–328; the sequence is TFKEECETDL…GKLRAMMPWI (146 aa). Aspartate 191, glutamate 195, glutamate 227, and glutamate 231 together coordinate Mg(2+). Serine 252 is a substrate binding site.

This sequence belongs to the ketol-acid reductoisomerase family. It depends on Mg(2+) as a cofactor.

The catalysed reaction is (2R)-2,3-dihydroxy-3-methylbutanoate + NADP(+) = (2S)-2-acetolactate + NADPH + H(+). The enzyme catalyses (2R,3R)-2,3-dihydroxy-3-methylpentanoate + NADP(+) = (S)-2-ethyl-2-hydroxy-3-oxobutanoate + NADPH + H(+). The protein operates within amino-acid biosynthesis; L-isoleucine biosynthesis; L-isoleucine from 2-oxobutanoate: step 2/4. It participates in amino-acid biosynthesis; L-valine biosynthesis; L-valine from pyruvate: step 2/4. Functionally, involved in the biosynthesis of branched-chain amino acids (BCAA). Catalyzes an alkyl-migration followed by a ketol-acid reduction of (S)-2-acetolactate (S2AL) to yield (R)-2,3-dihydroxy-isovalerate. In the isomerase reaction, S2AL is rearranged via a Mg-dependent methyl migration to produce 3-hydroxy-3-methyl-2-ketobutyrate (HMKB). In the reductase reaction, this 2-ketoacid undergoes a metal-dependent reduction by NADPH to yield (R)-2,3-dihydroxy-isovalerate. The chain is Ketol-acid reductoisomerase (NADP(+)) from Brucella suis (strain ATCC 23445 / NCTC 10510).